A 265-amino-acid chain; its full sequence is Tryptophan synthase alpha chain (265 aa).

Residues Glu-49 and Asp-60 each act as proton acceptor in the active site.

It belongs to the TrpA family. As to quaternary structure, tetramer of two alpha and two beta chains.

The catalysed reaction is (1S,2R)-1-C-(indol-3-yl)glycerol 3-phosphate + L-serine = D-glyceraldehyde 3-phosphate + L-tryptophan + H2O. It functions in the pathway amino-acid biosynthesis; L-tryptophan biosynthesis; L-tryptophan from chorismate: step 5/5. The alpha subunit is responsible for the aldol cleavage of indoleglycerol phosphate to indole and glyceraldehyde 3-phosphate. In Desulfatibacillum aliphaticivorans, this protein is Tryptophan synthase alpha chain.